The sequence spans 181 residues: 6,7-dimethyl-8-ribityllumazine synthase (181 aa).

5-amino-6-(D-ribitylamino)uracil contacts are provided by residues phenylalanine 24, 62–64 (SFE), and 86–88 (AII). 91–92 (QT) is a (2S)-2-hydroxy-3-oxobutyl phosphate binding site. Histidine 94 acts as the Proton donor in catalysis. A 5-amino-6-(D-ribitylamino)uracil-binding site is contributed by phenylalanine 119. Arginine 133 lines the (2S)-2-hydroxy-3-oxobutyl phosphate pocket.

It belongs to the DMRL synthase family.

The catalysed reaction is (2S)-2-hydroxy-3-oxobutyl phosphate + 5-amino-6-(D-ribitylamino)uracil = 6,7-dimethyl-8-(1-D-ribityl)lumazine + phosphate + 2 H2O + H(+). It participates in cofactor biosynthesis; riboflavin biosynthesis; riboflavin from 2-hydroxy-3-oxobutyl phosphate and 5-amino-6-(D-ribitylamino)uracil: step 1/2. Its function is as follows. Catalyzes the formation of 6,7-dimethyl-8-ribityllumazine by condensation of 5-amino-6-(D-ribitylamino)uracil with 3,4-dihydroxy-2-butanone 4-phosphate. This is the penultimate step in the biosynthesis of riboflavin. In Microcystis aeruginosa (strain NIES-843 / IAM M-2473), this protein is 6,7-dimethyl-8-ribityllumazine synthase.